Here is a 221-residue protein sequence, read N- to C-terminus: Thiamine-phosphate synthase (221 aa).

4-amino-2-methyl-5-(diphosphooxymethyl)pyrimidine contacts are provided by residues 41–45 and N82; that span reads QLRDK. The Mg(2+) site is built by D83 and D102. A 4-amino-2-methyl-5-(diphosphooxymethyl)pyrimidine-binding site is contributed by S120. 146–148 is a binding site for 2-[(2R,5Z)-2-carboxy-4-methylthiazol-5(2H)-ylidene]ethyl phosphate; the sequence is TPT. K149 provides a ligand contact to 4-amino-2-methyl-5-(diphosphooxymethyl)pyrimidine. G177 serves as a coordination point for 2-[(2R,5Z)-2-carboxy-4-methylthiazol-5(2H)-ylidene]ethyl phosphate.

The protein belongs to the thiamine-phosphate synthase family. Mg(2+) serves as cofactor.

It carries out the reaction 2-[(2R,5Z)-2-carboxy-4-methylthiazol-5(2H)-ylidene]ethyl phosphate + 4-amino-2-methyl-5-(diphosphooxymethyl)pyrimidine + 2 H(+) = thiamine phosphate + CO2 + diphosphate. It catalyses the reaction 2-(2-carboxy-4-methylthiazol-5-yl)ethyl phosphate + 4-amino-2-methyl-5-(diphosphooxymethyl)pyrimidine + 2 H(+) = thiamine phosphate + CO2 + diphosphate. The catalysed reaction is 4-methyl-5-(2-phosphooxyethyl)-thiazole + 4-amino-2-methyl-5-(diphosphooxymethyl)pyrimidine + H(+) = thiamine phosphate + diphosphate. It functions in the pathway cofactor biosynthesis; thiamine diphosphate biosynthesis; thiamine phosphate from 4-amino-2-methyl-5-diphosphomethylpyrimidine and 4-methyl-5-(2-phosphoethyl)-thiazole: step 1/1. Its function is as follows. Condenses 4-methyl-5-(beta-hydroxyethyl)thiazole monophosphate (THZ-P) and 2-methyl-4-amino-5-hydroxymethyl pyrimidine pyrophosphate (HMP-PP) to form thiamine monophosphate (TMP). The sequence is that of Thiamine-phosphate synthase from Mycolicibacterium vanbaalenii (strain DSM 7251 / JCM 13017 / BCRC 16820 / KCTC 9966 / NRRL B-24157 / PYR-1) (Mycobacterium vanbaalenii).